The primary structure comprises 102 residues: Feather keratin (102 aa).

Ser-1 carries the N-acetylserine modification.

Belongs to the avian keratin family. As to quaternary structure, the avian keratins (F-ker, S-ker, C-ker and B-ker) are a complex mixture of very similar polypeptides.

This is Feather keratin from Dromaius novaehollandiae (Emu).